We begin with the raw amino-acid sequence, 372 residues long: Alpha-1,3-mannosyl-glycoprotein 4-beta-N-acetylglucosaminyltransferase-like protein MGAT4D (372 aa).

Residues 1–8 (MKTKNVNL) lie on the Cytoplasmic side of the membrane. A helical; Signal-anchor for type II membrane protein membrane pass occupies residues 9-29 (LFALVAVLLFGFSCFCISRMN). The Lumenal segment spans residues 30 to 372 (QTNNQLINCR…REQHLKDHYY (343 aa)). 2 N-linked (GlcNAc...) asparagine glycosylation sites follow: Asn-54 and Asn-143.

It belongs to the glycosyltransferase 54 family. As to quaternary structure, may self-associate; specifically in the endoplasmic reticulum prior to its translocation to the Golgi. Interacts with MGAT1, MGAT3 and MAN2A2; may interact with MGTA1 specifically in the Golgi. In terms of processing, N-glycosylated. O-glycosylated; further modified with terminal sialic acid residues. In terms of tissue distribution, testis.

The protein localises to the golgi apparatus membrane. It is found in the endoplasmic reticulum membrane. May play a role in male spermatogenesis. In vitro acts as inhibitor of MGAT1 activity causing cell surface proteins to carry mainly high mannose N-glycans. The function is mediated by its lumenal domain and occurs specifically in the Golgi. A catalytic glucosyltransferase activity is not detected. May be involved in regulation of Sertoli-germ cell interactions during specific stages of spermatogenesis. This chain is Alpha-1,3-mannosyl-glycoprotein 4-beta-N-acetylglucosaminyltransferase-like protein MGAT4D, found in Rattus norvegicus (Rat).